The chain runs to 177 residues: Large ribosomal subunit protein uL6 (177 aa).

It belongs to the universal ribosomal protein uL6 family. As to quaternary structure, part of the 50S ribosomal subunit.

Functionally, this protein binds to the 23S rRNA, and is important in its secondary structure. It is located near the subunit interface in the base of the L7/L12 stalk, and near the tRNA binding site of the peptidyltransferase center. The chain is Large ribosomal subunit protein uL6 from Bartonella bacilliformis (strain ATCC 35685 / KC583 / Herrer 020/F12,63).